The sequence spans 468 residues: MAQFFKEKANKSKQLSPKLSLNVTQLDHLGAGMAQHQGKVVFIPQALPGERVSVQLTDQKKSFAKAKLIKIEQQSPERADASCPHYGHCGGCDLQHLALDAQQNHKQQSLNELMVKFSGSPVIDPQVQAAPLVSPPWHYRRRARLATYFNNNDKSLKLGFRALSSKQIVPIKQCPVLAEPLSALINPFSLLLARLKAKASLGHLELTQADNGTFAVLRVTKVLPAADIRALASFALTQGINLLLQDDSGALTDVMTMAPAEDEGATQVEQSALTLPEYALSQGQVSCQFTPGNFVQVNAEVNQRMVEQAVNWLDLQVGERVLDLFCGVGNFSLALANRGQNLDGLEVIGVEGVPEMVQQARENAKRNNLANLSFYHADLSADLSNEKWLGKIDKLLLDPARAGAFESLQWLQKMKPKKVVYVSCNPASLARDSSVLLSQGYQLKQLSMIDMFPQTHHIEAMALFEIAT.

In terms of domain architecture, TRAM spans 12-70; sequence SKQLSPKLSLNVTQLDHLGAGMAQHQGKVVFIPQALPGERVSVQLTDQKKSFAKAKLIK. 4 residues coordinate [4Fe-4S] cluster: C83, C89, C92, and C174. S-adenosyl-L-methionine-binding residues include Q296, F325, N330, E351, D378, and D398. Catalysis depends on C424, which acts as the Nucleophile.

It belongs to the class I-like SAM-binding methyltransferase superfamily. RNA M5U methyltransferase family. RlmD subfamily.

It carries out the reaction uridine(1939) in 23S rRNA + S-adenosyl-L-methionine = 5-methyluridine(1939) in 23S rRNA + S-adenosyl-L-homocysteine + H(+). Its function is as follows. Catalyzes the formation of 5-methyl-uridine at position 1939 (m5U1939) in 23S rRNA. This Shewanella denitrificans (strain OS217 / ATCC BAA-1090 / DSM 15013) protein is 23S rRNA (uracil(1939)-C(5))-methyltransferase RlmD.